Consider the following 182-residue polypeptide: Ribosome maturation factor RimM (182 aa).

A PRC barrel domain is found at 102–182 (GEGDYYWKDL…TIEVDWDPGF (81 aa)).

It belongs to the RimM family. Binds ribosomal protein uS19.

The protein localises to the cytoplasm. Functionally, an accessory protein needed during the final step in the assembly of 30S ribosomal subunit, possibly for assembly of the head region. Essential for efficient processing of 16S rRNA. May be needed both before and after RbfA during the maturation of 16S rRNA. It has affinity for free ribosomal 30S subunits but not for 70S ribosomes. The protein is Ribosome maturation factor RimM of Pectobacterium carotovorum subsp. carotovorum (strain PC1).